Reading from the N-terminus, the 226-residue chain is Ribonuclease 3 (226 aa).

Residues 6–128 (INRLQRKLGY…LIGGIFLDSD (123 aa)) form the RNase III domain. Glutamate 41 serves as a coordination point for Mg(2+). Aspartate 45 is an active-site residue. The Mg(2+) site is built by aspartate 114 and glutamate 117. Residue glutamate 117 is part of the active site. In terms of domain architecture, DRBM spans 155–225 (DPKTRLQEFL…AEQALKQLEL (71 aa)).

The protein belongs to the ribonuclease III family. Homodimer. Mg(2+) serves as cofactor.

It localises to the cytoplasm. It catalyses the reaction Endonucleolytic cleavage to 5'-phosphomonoester.. Its function is as follows. Digests double-stranded RNA. Involved in the processing of primary rRNA transcript to yield the immediate precursors to the large and small rRNAs (23S and 16S). Processes some mRNAs, and tRNAs when they are encoded in the rRNA operon. Processes pre-crRNA and tracrRNA of type II CRISPR loci if present in the organism. In Edwardsiella ictaluri (strain 93-146), this protein is Ribonuclease 3.